The following is a 475-amino-acid chain: Tryptophan--tRNA ligase, cytoplasmic (475 aa).

Positions 12–68 (SPQELFSSIAAQGELVKSLKARKAPKEEIDSAVKMLLSLKTSYKEAMGEDYKADCPP) constitute a WHEP-TRS domain. The disordered stretch occupies residues 61-87 (DYKADCPPGNSTPDSHGDPEAVDDKED). An N6-succinyllysine modification is found at Lys158. Residues 168 to 177 (PSSEAMHVGH) carry the 'HIGH' region motif. The 'KMSKS' region motif lies at 353-357 (KMSAS). Ser355 is subject to Phosphoserine.

Belongs to the class-I aminoacyl-tRNA synthetase family. Homodimer. Interacts with oxidized form of GAPDH. Post-translationally, proteolytic cleavage generates 2 forms; T1-TrpRS and T2-TrpRS.

It is found in the cytoplasm. It carries out the reaction tRNA(Trp) + L-tryptophan + ATP = L-tryptophyl-tRNA(Trp) + AMP + diphosphate + H(+). Functionally, catalyzes the attachment of tryptophan to tRNA(Trp) in a two-step reaction: tryptophan is first activated by ATP to form Trp-AMP and then transferred to the acceptor end of the tRNA(Trp). Could also possess an angiostatic activity. This Oryctolagus cuniculus (Rabbit) protein is Tryptophan--tRNA ligase, cytoplasmic (WARS1).